The sequence spans 72 residues: Translational regulator CsrA (72 aa).

This sequence belongs to the CsrA/RsmA family. In terms of assembly, homodimer; the beta-strands of each monomer intercalate to form a hydrophobic core, while the alpha-helices form wings that extend away from the core.

It localises to the cytoplasm. A translational regulator that binds mRNA to regulate translation initiation and/or mRNA stability. Usually binds in the 5'-UTR at or near the Shine-Dalgarno sequence preventing ribosome-binding, thus repressing translation. Its main target seems to be the major flagellin gene, while its function is anatagonized by FliW. The polypeptide is Translational regulator CsrA (Ruminiclostridium cellulolyticum (strain ATCC 35319 / DSM 5812 / JCM 6584 / H10) (Clostridium cellulolyticum)).